A 453-amino-acid polypeptide reads, in one-letter code: Bifunctional protein GlmU (453 aa).

Positions 1 to 231 (MERSSLAVIL…EKELTGCNNR (231 aa)) are pyrophosphorylase. UDP-N-acetyl-alpha-D-glucosamine-binding positions include 10 to 13 (LAAG), K24, Q77, 82 to 83 (GT), 105 to 107 (YGD), G143, E157, N172, and N229. D107 provides a ligand contact to Mg(2+). N229 contacts Mg(2+). The linker stretch occupies residues 232–252 (AELAFIERLWQERRRHELMVD). An N-acetyltransferase region spans residues 253 to 453 (GVSMIAPETV…AQKEAKKKSS (201 aa)). Residues R318 and K336 each contribute to the UDP-N-acetyl-alpha-D-glucosamine site. H348 functions as the Proton acceptor in the catalytic mechanism. The UDP-N-acetyl-alpha-D-glucosamine site is built by Y351 and N362. Residues A365, 371–372 (NY), S390, S408, and R425 each bind acetyl-CoA.

The protein in the N-terminal section; belongs to the N-acetylglucosamine-1-phosphate uridyltransferase family. In the C-terminal section; belongs to the transferase hexapeptide repeat family. Homotrimer. Mg(2+) serves as cofactor.

The protein localises to the cytoplasm. The catalysed reaction is alpha-D-glucosamine 1-phosphate + acetyl-CoA = N-acetyl-alpha-D-glucosamine 1-phosphate + CoA + H(+). It catalyses the reaction N-acetyl-alpha-D-glucosamine 1-phosphate + UTP + H(+) = UDP-N-acetyl-alpha-D-glucosamine + diphosphate. The protein operates within nucleotide-sugar biosynthesis; UDP-N-acetyl-alpha-D-glucosamine biosynthesis; N-acetyl-alpha-D-glucosamine 1-phosphate from alpha-D-glucosamine 6-phosphate (route II): step 2/2. Its pathway is nucleotide-sugar biosynthesis; UDP-N-acetyl-alpha-D-glucosamine biosynthesis; UDP-N-acetyl-alpha-D-glucosamine from N-acetyl-alpha-D-glucosamine 1-phosphate: step 1/1. It participates in bacterial outer membrane biogenesis; LPS lipid A biosynthesis. Catalyzes the last two sequential reactions in the de novo biosynthetic pathway for UDP-N-acetylglucosamine (UDP-GlcNAc). The C-terminal domain catalyzes the transfer of acetyl group from acetyl coenzyme A to glucosamine-1-phosphate (GlcN-1-P) to produce N-acetylglucosamine-1-phosphate (GlcNAc-1-P), which is converted into UDP-GlcNAc by the transfer of uridine 5-monophosphate (from uridine 5-triphosphate), a reaction catalyzed by the N-terminal domain. This Agrobacterium fabrum (strain C58 / ATCC 33970) (Agrobacterium tumefaciens (strain C58)) protein is Bifunctional protein GlmU.